The following is a 124-amino-acid chain: Protein MT1307 (124 aa).

The tat-type signal signal peptide spans 1–35 (MTTMITLRRRFAVAVAGVATAAATTVTLAPAPANA).

To M.tuberculosis Rv1813c. Predicted to be exported by the Tat system. The position of the signal peptide cleavage has not been experimentally proven.

This chain is Protein MT1307, found in Mycobacterium tuberculosis (strain CDC 1551 / Oshkosh).